Reading from the N-terminus, the 487-residue chain is DNA ligase (487 aa).

K159 functions as the N6-AMP-lysine intermediate in the catalytic mechanism. ATP is bound by residues R164, R182, and E217. E217 is an a divalent metal cation binding site. Positions E229–A237 are interaction with the sliding clamp. E344 contacts a divalent metal cation. The ATP site is built by R359 and K365.

This sequence belongs to the ATP-dependent DNA ligase family. As to quaternary structure, interacts with the sliding clamp. A divalent metal cation serves as cofactor.

The enzyme catalyses ATP + (deoxyribonucleotide)n-3'-hydroxyl + 5'-phospho-(deoxyribonucleotide)m = (deoxyribonucleotide)n+m + AMP + diphosphate.. Its function is as follows. DNA ligase, which is expressed in the early stage of lytic development, has been implicated in T4 DNA synthesis and genetic recombination. It may also play a role in T4 DNA repair. This is DNA ligase (30) from Enterobacteria phage T4 (Bacteriophage T4).